Reading from the N-terminus, the 516-residue chain is Bifunctional pantoate ligase/cytidylate kinase (516 aa).

Residues 1-279 form a pantoate--beta-alanine ligase region; it reads MVRKIFQTNA…CGSTRLIDHT (279 aa). 29 to 36 is an ATP binding site; the sequence is MGGLHPGH. Histidine 36 acts as the Proton donor in catalysis. Residue glutamine 64 participates in (R)-pantoate binding. Glutamine 64 contacts beta-alanine. 153–156 is an ATP binding site; it reads GEKD. Residue glutamine 159 coordinates (R)-pantoate. 190 to 193 provides a ligand contact to ATP; sequence YSSR. Residues 280 to 516 are cytidylate kinase; sequence FLMHRKPIIA…PEEVWPTPNS (237 aa).

The protein in the N-terminal section; belongs to the pantothenate synthetase family. This sequence in the C-terminal section; belongs to the cytidylate kinase family. Type 1 subfamily.

Its subcellular location is the cytoplasm. It catalyses the reaction (R)-pantoate + beta-alanine + ATP = (R)-pantothenate + AMP + diphosphate + H(+). The enzyme catalyses CMP + ATP = CDP + ADP. The catalysed reaction is dCMP + ATP = dCDP + ADP. Its pathway is cofactor biosynthesis; (R)-pantothenate biosynthesis; (R)-pantothenate from (R)-pantoate and beta-alanine: step 1/1. Its function is as follows. Catalyzes the condensation of pantoate with beta-alanine in an ATP-dependent reaction via a pantoyl-adenylate intermediate. Functionally, catalyzes the transfer of a phosphate group from ATP to either CMP or dCMP to form CDP or dCDP and ADP, respectively. In Prochlorococcus marinus (strain NATL1A), this protein is Bifunctional pantoate ligase/cytidylate kinase.